A 283-amino-acid chain; its full sequence is Pantothenate synthetase 1 (283 aa).

An ATP-binding site is contributed by 30 to 37; it reads MGYLHDGH. Catalysis depends on H37, which acts as the Proton donor. Residue Q61 participates in (R)-pantoate binding. Residue Q61 coordinates beta-alanine. 147 to 150 contributes to the ATP binding site; that stretch reads GQKD. (R)-pantoate is bound at residue Q153. Residues V176 and 184-187 contribute to the ATP site; that span reads MSSR.

This sequence belongs to the pantothenate synthetase family. As to quaternary structure, homodimer.

The protein resides in the cytoplasm. The enzyme catalyses (R)-pantoate + beta-alanine + ATP = (R)-pantothenate + AMP + diphosphate + H(+). Its pathway is cofactor biosynthesis; (R)-pantothenate biosynthesis; (R)-pantothenate from (R)-pantoate and beta-alanine: step 1/1. Catalyzes the condensation of pantoate with beta-alanine in an ATP-dependent reaction via a pantoyl-adenylate intermediate. The polypeptide is Pantothenate synthetase 1 (Bradyrhizobium diazoefficiens (strain JCM 10833 / BCRC 13528 / IAM 13628 / NBRC 14792 / USDA 110)).